Here is a 475-residue protein sequence, read N- to C-terminus: tRNA-2-methylthio-N(6)-dimethylallyladenosine synthase (475 aa).

The MTTase N-terminal domain occupies 3 to 120 (KKLHIKTWGC…LPEMIDQIKD (118 aa)). Residues Cys-12, Cys-49, Cys-83, Cys-157, Cys-161, and Cys-164 each coordinate [4Fe-4S] cluster. The Radical SAM core domain maps to 143-375 (RAEGPSAFVS…QDRITQQAMR (233 aa)). The region spanning 378–441 (RQMVGTVQRI…TNSLRGVFIR (64 aa)) is the TRAM domain.

It belongs to the methylthiotransferase family. MiaB subfamily. Monomer. [4Fe-4S] cluster is required as a cofactor.

It localises to the cytoplasm. It catalyses the reaction N(6)-dimethylallyladenosine(37) in tRNA + (sulfur carrier)-SH + AH2 + 2 S-adenosyl-L-methionine = 2-methylsulfanyl-N(6)-dimethylallyladenosine(37) in tRNA + (sulfur carrier)-H + 5'-deoxyadenosine + L-methionine + A + S-adenosyl-L-homocysteine + 2 H(+). In terms of biological role, catalyzes the methylthiolation of N6-(dimethylallyl)adenosine (i(6)A), leading to the formation of 2-methylthio-N6-(dimethylallyl)adenosine (ms(2)i(6)A) at position 37 in tRNAs that read codons beginning with uridine. The chain is tRNA-2-methylthio-N(6)-dimethylallyladenosine synthase from Shewanella pealeana (strain ATCC 700345 / ANG-SQ1).